Reading from the N-terminus, the 287-residue chain is Putative holocytochrome-c1 synthase (287 aa).

Residues 1–12 are compositionally biased toward polar residues; the sequence is MRGFGSDSSQAS. 2 disordered regions span residues 1–63 and 81–100; these read MRGF…QPSS and QSQS…SAPL. Composition is skewed to low complexity over residues 31 to 63 and 81 to 92; these read QARA…QPSS and QSQSANSTQQAQ.

This sequence belongs to the cytochrome c-type heme lyase family.

Its subcellular location is the mitochondrion inner membrane. It carries out the reaction holo-[cytochrome c] = apo-[cytochrome c] + heme b. Functionally, probable lyase that catalyzes the covalent linking of the heme group to the cytochrome C apoprotein to produce the mature functional cytochrome. In Chaetomium thermophilum (strain DSM 1495 / CBS 144.50 / IMI 039719) (Thermochaetoides thermophila), this protein is Putative holocytochrome-c1 synthase.